Reading from the N-terminus, the 90-residue chain is Small ribosomal subunit protein bS20 (90 aa).

The protein belongs to the bacterial ribosomal protein bS20 family.

Its function is as follows. Binds directly to 16S ribosomal RNA. The sequence is that of Small ribosomal subunit protein bS20 from Mesomycoplasma hyopneumoniae (strain 232) (Mycoplasma hyopneumoniae).